The following is a 447-amino-acid chain: GA-binding protein subunit beta-2 (447 aa).

ANK repeat units lie at residues 5–34, 37–66, 70–99, 103–132, and 136–166; these read DLGKRLLEAARKGQDDEVRTLMANGAPFTT, LGTSPLHLAAQYGHYSTAEVLLRAGVSRDA, VDRTPLHMAAADGHAHIVELLVRNGADVNA, LKMTALHWATEHHHRDVVELLIKYGADVHA, and FDKSAFDIALEKNNAEILVILQEAMQNQVNA. At Ser-253 the chain carries Phosphoserine. The stretch at 345 to 395 forms a coiled coil; it reads EESKEGTERELLQQRLQEANRRAQEYRHQLLKKEQEAEQYRLRLEAMARQQ. Positions 418–447 are disordered; it reads REMEERETEVTGAVGTAEPHTGVSMETVST.

As to quaternary structure, heterotetramer of two alpha and two beta subunits. The C-terminal is necessary for the formation of a heterotetrameric GABP-alpha-2/beta-2 complex, and also facilitates homotypic dimerization. Interacts with ADGRB2.

It is found in the nucleus. In terms of biological role, may function as transcription factor capable of interacting with purine rich repeats (GA repeats). The protein is GA-binding protein subunit beta-2 (GABPB2) of Bos taurus (Bovine).